The sequence spans 124 residues: Mediator of RNA polymerase II transcription subunit 31 (124 aa).

This sequence belongs to the Mediator complex subunit 31 family. As to quaternary structure, component of the Mediator complex.

The protein localises to the nucleus. Its function is as follows. Component of the Mediator complex, a coactivator involved in the regulated transcription of nearly all RNA polymerase II-dependent genes. Mediator functions as a bridge to convey information from gene-specific regulatory proteins to the basal RNA polymerase II transcription machinery. Mediator is recruited to promoters by direct interactions with regulatory proteins and serves as a scaffold for the assembly of a functional preinitiation complex with RNA polymerase II and the general transcription factors. The polypeptide is Mediator of RNA polymerase II transcription subunit 31 (SOH1) (Kluyveromyces lactis (strain ATCC 8585 / CBS 2359 / DSM 70799 / NBRC 1267 / NRRL Y-1140 / WM37) (Yeast)).